A 68-amino-acid polypeptide reads, in one-letter code: Large ribosomal subunit protein bL32 (68 aa).

This sequence belongs to the bacterial ribosomal protein bL32 family.

The polypeptide is Large ribosomal subunit protein bL32 (Ruegeria pomeroyi (strain ATCC 700808 / DSM 15171 / DSS-3) (Silicibacter pomeroyi)).